We begin with the raw amino-acid sequence, 159 residues long: Small ribosomal subunit protein uS9 (159 aa).

Belongs to the universal ribosomal protein uS9 family.

This Rickettsia peacockii (strain Rustic) protein is Small ribosomal subunit protein uS9.